The sequence spans 1027 residues: Fibril-forming collagen alpha chain (1027 aa).

Positions 1–12 are nonhelical region (N-terminal); sequence YRAGPRYIQAQV. Residues 1–1027 form a disordered region; the sequence is YRAGPRYIQA…GPPGNSDYGA (1027 aa). The triple-helical region stretch occupies residues 13 to 1023; it reads GPIGPRGPPG…PGPPGPPGNS (1011 aa). The segment covering 17–26 has biased composition (pro residues); the sequence is PRGPPGPPGS. Pro-21 and Pro-24 each carry 4-hydroxyproline; partial. 4-hydroxyproline occurs at positions 27 and 39. Residue Pro-53 is modified to 3-hydroxyproline; partial. Pro-54 carries the 4-hydroxyproline modification. Over residues 63 to 72 the composition is skewed to basic and acidic residues; sequence SGDDGRDGEP. Position 72 is a 4-hydroxyproline; partial (Pro-72). Gly residues predominate over residues 73 to 91; that stretch reads GPRGGIGPMGPRGAGGMPG. Pro-90 and Pro-93 each carry 4-hydroxyproline. A 5-hydroxylysine mark is found at Lys-96 and Lys-108. Lys-96 and Lys-108 each carry an O-linked (Gal...) hydroxylysine glycan. 2 positions are modified to 4-hydroxyproline; partial: Pro-123 and Pro-128. Pro-150 carries the post-translational modification 4-hydroxyproline. Position 161 is a 3-hydroxyproline; partial (Pro-161). 4-hydroxyproline is present on Pro-162. Position 164 is a 3-hydroxyproline; partial (Pro-164). Pro-165, Pro-174, Pro-177, and Pro-180 each carry 4-hydroxyproline. Positions 168 to 182 are enriched in low complexity; that stretch reads IGSTGSPGFPGTPGS. 2 positions are modified to 5-hydroxylysine: Lys-183 and Lys-192. An O-linked (Gal...) hydroxylysine glycan is attached at Lys-192. Residues Pro-207, Pro-216, Pro-219, Pro-228, and Pro-237 each carry the 4-hydroxyproline modification. A compositionally biased stretch (low complexity) spans 227 to 249; sequence EPGASGESGLPGPSGFPGPRGMP. Pro-243 is modified (4-hydroxyproline; partial). A 4-hydroxyproline mark is found at Pro-249 and Pro-255. The segment covering 259–268 has biased composition (gly residues); that stretch reads GAKGDGGPTG. Residue Lys-261 is modified to 5-hydroxylysine. The O-linked (Gal...) hydroxylysine glycan is linked to Lys-261. 2 positions are modified to 4-hydroxyproline; partial: Pro-273 and Pro-276. 5-hydroxylysine is present on Lys-279. O-linked (Gal...) hydroxylysine glycosylation occurs at Lys-279. A 4-hydroxyproline; partial mark is found at Pro-285, Pro-291, and Pro-303. Residues Pro-306, Pro-312, Pro-321, Pro-327, and Pro-339 each carry the 4-hydroxyproline modification. The residue at position 342 (Lys-342) is a 5-hydroxylysine. Position 348 is a 4-hydroxyproline; partial (Pro-348). 5-hydroxylysine; partial is present on Lys-351. 3 positions are modified to 4-hydroxyproline: Pro-366, Pro-372, and Pro-375. Basic and acidic residues predominate over residues 380–396; sequence RPGKDGRPGIRGKDGKQ. Pro-381 carries the post-translational modification 4-hydroxyproline; partial. Pro-387 carries the post-translational modification 4-hydroxyproline. Positions 398-420 are enriched in low complexity; the sequence is EQGPQGPQGLAGLQGRAGPPGAR. Residue Pro-416 is modified to 3-hydroxyproline; partial. Pro-417, Pro-423, Pro-429, and Pro-432 each carry 4-hydroxyproline. Positions 437–446 are enriched in basic and acidic residues; it reads EQGDAGKDGE. The span at 447–480 shows a compositional bias: low complexity; it reads TGAAGPPGAAGPTGARGPPGPRGQQGFQGLAGAQ. 4-hydroxyproline occurs at positions 453, 465, and 483. A 4-hydroxyproline; partial mark is found at Pro-500, Pro-503, and Pro-506. A compositionally biased stretch (gly residues) spans 502 to 511; the sequence is GPAGPGGERG. 4-hydroxyproline occurs at positions 513 and 525. The span at 527-543 shows a compositional bias: low complexity; it reads ERGATGPAGPTGSPGVA. 4-hydroxyproline; partial is present on residues Pro-533 and Pro-536. A 4-hydroxyproline modification is found at Pro-540. Position 546 is a 5-hydroxylysine (Lys-546). Pro-551 is modified (3-hydroxyproline; partial). A 4-hydroxyproline mark is found at Pro-552 and Pro-561. 2 positions are modified to 5-hydroxylysine: Lys-567 and Lys-573. Lys-573 carries O-linked (Gal...) hydroxylysine glycosylation. The span at 575–599 shows a compositional bias: basic and acidic residues; it reads SRGDIGPRGKAGERGKDGERGERGE. Pro-603 carries the post-translational modification 4-hydroxyproline. Lys-612 is modified (5-hydroxylysine). Lys-612 is a glycosylation site (O-linked (Gal...) hydroxylysine). Pro-621 is modified (4-hydroxyproline; partial). A 4-hydroxyproline modification is found at Pro-627. Over residues 635 to 644 the composition is skewed to low complexity; sequence PAGSQGIQGQ. Pro-645 bears the 4-hydroxyproline; partial mark. The residue at position 647 (Pro-647) is a 3-hydroxyproline; partial. The residue at position 648 (Pro-648) is a 4-hydroxyproline. The residue at position 657 (Lys-657) is a 5-hydroxylysine. O-linked (Gal...) hydroxylysine glycosylation occurs at Lys-657. Residues Pro-663, Pro-708, Pro-711, Pro-714, Pro-717, and Pro-723 each carry the 4-hydroxyproline modification. A compositionally biased stretch (low complexity) spans 698–710; the sequence is ETGAQGEIGLPGS. Over residues 714–726 the composition is skewed to pro residues; the sequence is PGLPGPSGQPGPS. 5-hydroxylysine is present on Lys-738. An O-linked (Gal...) hydroxylysine glycan is attached at Lys-738. 2 positions are modified to 4-hydroxyproline: Pro-744 and Pro-759. The segment covering 750 to 771 has biased composition (basic and acidic residues); that stretch reads QGDRGSDGEPGRDGTKGERGED. 5-hydroxylysine is present on Lys-765. Lys-765 carries O-linked (Gal...) hydroxylysine glycosylation. The residue at position 773 (Pro-773) is a 3-hydroxyproline; partial. 3 positions are modified to 4-hydroxyproline: Pro-774, Pro-783, and Pro-792. The segment covering 802–814 has biased composition (gly residues); it reads GPMGGQGMKGDGG. The residue at position 810 (Lys-810) is a 5-hydroxylysine. A glycan (O-linked (Gal...) hydroxylysine) is linked at Lys-810. Residue Pro-815 is modified to 3-hydroxyproline; partial. A 4-hydroxyproline mark is found at Pro-816, Pro-843, Pro-849, Pro-855, Pro-861, Pro-867, Pro-888, Pro-894, Pro-903, and Pro-915. The span at 828–848 shows a compositional bias: low complexity; sequence AGPQGPTGPSGQAGAPGQEGA. The segment covering 884 to 894 has biased composition (low complexity); that stretch reads QRGLPGAAGPP. Residues 911-927 show a composition bias toward low complexity; sequence PVGAPGSQGPAGIMGMK. Residue Lys-927 is modified to 5-hydroxylysine. Lys-927 carries O-linked (Gal...) hydroxylysine glycosylation. Position 933 is a 5-hydroxylysine; partial (Lys-933). 5-hydroxylysine occurs at positions 936 and 939. An O-linked (Gal...) hydroxylysine glycan is attached at Lys-936. A compositionally biased stretch (low complexity) spans 942–962; that stretch reads TGLPGLQGLQGTPGHSGESGP. A 4-hydroxyproline modification is found at Pro-945. Pro-954 carries the post-translational modification 4-hydroxyproline; partial. Residues Pro-963 and Pro-966 each carry the 4-hydroxyproline modification. Gly residues predominate over residues 973 to 982; that stretch reads GEAGGRGSQG. Residues 983–1001 are compositionally biased toward low complexity; the sequence is PPGKDGQPGPSGRVGPRGP. 4-hydroxyproline occurs at positions 984 and 990. Residue Pro-1010 is modified to 3-hydroxyproline; partial. A compositionally biased stretch (pro residues) spans 1010–1020; the sequence is PPGPPGPPGPP. Pro-1011 is subject to 4-hydroxyproline. The residue at position 1013 (Pro-1013) is a 3-hydroxyproline; partial. Position 1014 is a 4-hydroxyproline (Pro-1014). The residue at position 1016 (Pro-1016) is a 3-hydroxyproline; partial. Residue Pro-1017 is modified to 4-hydroxyproline. Pro-1019 is subject to 3-hydroxyproline; partial. Pro-1020 bears the 4-hydroxyproline mark. A nonhelical region (C-terminal) region spans residues 1024 to 1027; that stretch reads DYGA.

In terms of assembly, homotetramer.

The protein localises to the secreted. The protein resides in the extracellular space. It is found in the extracellular matrix. Functionally, fibril-forming collagen. In Riftia pachyptila (Vent tube worm), this protein is Fibril-forming collagen alpha chain.